Reading from the N-terminus, the 393-residue chain is tRNA(Met) cytidine acetate ligase (393 aa).

ATP is bound by residues G81, N142, and R167.

It belongs to the TmcAL family.

The protein resides in the cytoplasm. The enzyme catalyses cytidine(34) in elongator tRNA(Met) + acetate + ATP = N(4)-acetylcytidine(34) in elongator tRNA(Met) + AMP + diphosphate. Functionally, catalyzes the formation of N(4)-acetylcytidine (ac(4)C) at the wobble position of elongator tRNA(Met), using acetate and ATP as substrates. First activates an acetate ion to form acetyladenylate (Ac-AMP) and then transfers the acetyl group to tRNA to form ac(4)C34. The protein is tRNA(Met) cytidine acetate ligase of Bacillus anthracis (strain A0248).